Consider the following 412-residue polypeptide: Zinc finger protein 260 (412 aa).

13 C2H2-type zinc fingers span residues Y27–H49, H55–H77, Y83–H105, Y136–H158, F164–H186, F192–H214, Y220–H242, Y248–H270, Y276–H298, Y304–H326, Y332–H354, Y360–H382, and Y388–H412.

Belongs to the krueppel C2H2-type zinc-finger protein family. Binds DNA. Interacts with GATA4.

Its subcellular location is the nucleus. Transcription factor that acts as a cardiac regulator and an effector of alpha1-adrenergic signaling. Binds to PE response elements (PERE) present in the promoter of genes such as ANF/NPPA and acts as a direct transcriptional activator of NPPA. Also acts as a cofactor with GATA4, a key cardiac regulator. The sequence is that of Zinc finger protein 260 (ZNF260) from Homo sapiens (Human).